Reading from the N-terminus, the 397-residue chain is 3-hydroxy-3-methylglutaryl-coenzyme A reductase (397 aa).

Catalysis depends on charge relay system residues Glu96 and Asp301. Residue His391 is the Proton donor of the active site.

The protein belongs to the HMG-CoA reductase family.

The enzyme catalyses (R)-mevalonate + 2 NADP(+) + CoA = (3S)-3-hydroxy-3-methylglutaryl-CoA + 2 NADPH + 2 H(+). It functions in the pathway metabolic intermediate biosynthesis; (R)-mevalonate biosynthesis; (R)-mevalonate from acetyl-CoA: step 3/3. Converts HMG-CoA to mevalonate. The chain is 3-hydroxy-3-methylglutaryl-coenzyme A reductase (hmgA) from Methanothermobacter thermautotrophicus (strain ATCC 29096 / DSM 1053 / JCM 10044 / NBRC 100330 / Delta H) (Methanobacterium thermoautotrophicum).